The primary structure comprises 270 residues: MLRKVFYISDGTAITAEVFGHAVLSQFPLEFDALTIPFVETQEKAEAVKAQINDCFITTGERPLVFHSIVKAEIRDIIYSSEGLDYDFLNTFVAPLEKQLGVAAAPALHRTHGKANESYEARIDAINYAMENDDGQTMKHMDKADLILLGVSRCGKTPSSLYLSMQFGIKAANYPFTEDDMDNLKLPEALKRNKHKLFGLTIDPERLHEIRHSRMSNSRYSSLRQCRVEVKEVEMLYKKERIPYVNTTNHSVEEIATKILEETGLKRHMF.

150-157 provides a ligand contact to ADP; the sequence is GVSRCGKT.

This sequence belongs to the pyruvate, phosphate/water dikinase regulatory protein family. PSRP subfamily.

The catalysed reaction is [pyruvate, water dikinase] + ADP = [pyruvate, water dikinase]-phosphate + AMP + H(+). It carries out the reaction [pyruvate, water dikinase]-phosphate + phosphate + H(+) = [pyruvate, water dikinase] + diphosphate. Its function is as follows. Bifunctional serine/threonine kinase and phosphorylase involved in the regulation of the phosphoenolpyruvate synthase (PEPS) by catalyzing its phosphorylation/dephosphorylation. This is Putative phosphoenolpyruvate synthase regulatory protein from Shewanella pealeana (strain ATCC 700345 / ANG-SQ1).